We begin with the raw amino-acid sequence, 248 residues long: MLKYSALFLYLIYVGGSESAHSRIVGGVPVAEEKVPYVVSIRMKEIHVCGGSILSESIVLTAAHCFDKSKGYSNYAVFAGSNRLSGGLKVEIQNITIHPKYIGPSDWWKNDLAVVKLKKPLNFSKSVRTVKIFPSYVPENETVYAYGWGKTIVPFFTLPNVLQKLETKALNLTACQKSWKEHVVESQLCLWTGHGTGVGLCKADSGGPVVYKGKLVGVISWVQVHCNTKKPDVAVRLSPYFENGLRKR.

A signal peptide spans 1 to 19 (MLKYSALFLYLIYVGGSES). Residues 24–248 (IVGGVPVAEE…PYFENGLRKR (225 aa)) enclose the Peptidase S1 domain. The cysteines at positions 49 and 65 are disulfide-linked. Catalysis depends on charge relay system residues His64 and Asp111. Disulfide bonds link Cys175–Cys189 and Cys201–Cys226. Ser205 acts as the Charge relay system in catalysis.

It belongs to the peptidase S1 family. As to expression, expressed in salivary glands.

The protein resides in the secreted. In terms of biological role, serine protease that inhibits blood coagulation in a dose-dependent manner. May act by destroying coagulant factors to inhibit blood coagulation. The polypeptide is Tabserin (Tabanus yao (Horsefly)).